The sequence spans 1616 residues: S-layer-related protein (1616 aa).

Residues 1 to 30 form the signal peptide; it reads MKSLLRKWNGMMIIALVISLLTPAWGKASA. In terms of domain architecture, BIG2 spans 1115-1185; that stretch reads VKALKLDRGT…GSGTVQATYE (71 aa). Disordered regions lie at residues 1191–1244, 1372–1455, 1523–1554, and 1585–1616; these read ARVS…DGRN, NKRN…GRAR, ARGR…REAG, and FAGG…ARPC. A compositionally biased stretch (gly residues) spans 1199–1225; it reads STGGGSDTGSGTGSGSGGGSAGGGGTA. The span at 1372–1387 shows a compositional bias: basic residues; the sequence is NKRNRRLRKLRPKNRK. Residues 1406–1416 show a composition bias toward low complexity; it reads PPECSASCPPA. The region spanning 1438–1502 is the SLH domain; sequence WSPPRSASPT…ALDPAPAAAD (65 aa). Residues 1536–1554 show a composition bias toward basic and acidic residues; that stretch reads RGADTRTDERDAHARREAG. Positions 1594 to 1616 are enriched in basic residues; it reads GRTRGRTLRARPARLPVRKARPC.

It localises to the secreted. Its subcellular location is the cell wall. The protein resides in the S-layer. The S-layer is a paracrystalline mono-layered assembly of proteins which coats the surface of bacteria. May play a role in the export of butirosin from the organism. The chain is S-layer-related protein (butB) from Niallia circulans (Bacillus circulans).